An 813-amino-acid polypeptide reads, in one-letter code: Sodium/hydrogen exchanger 2 (813 aa).

Helical transmembrane passes span 108–128 (IVPE…IIFG), 139–159 (TDVF…YFMP), 170–190 (IFWY…LSLF), 210–230 (LFGS…FENI), 238–258 (ILVF…YNLF), 279–299 (FFVV…IAAF), and 309–329 (VIEP…AEMF). A glycan (N-linked (GlcNAc...) asparagine) is linked at asparagine 351. 4 helical membrane-spanning segments follow: residues 362–382 (YFMK…MGVS), 393–413 (AFVC…VFVL), 431–451 (FIIA…FLLP), and 460–480 (LFIT…GITI). Residues 649–661 (LRKDNSLNRERRA) show a composition bias toward basic and acidic residues. Disordered regions lie at residues 649–709 (LRKD…NLQP) and 736–813 (DVGS…NEKP). The span at 687–696 (VSNADGNSSD) shows a compositional bias: polar residues. Composition is skewed to basic and acidic residues over residues 770–781 (KDQRFGRGREDS) and 797–813 (RASE…NEKP).

It belongs to the monovalent cation:proton antiporter 1 (CPA1) transporter (TC 2.A.36) family. Interacts with CHP1 and CHP2. As to expression, predominantly in small intestine, colon, and stomach, with much lower levels in skeletal muscle, kidney, brain, testis, uterus, heart and lung.

The protein resides in the apical cell membrane. The catalysed reaction is Na(+)(in) + H(+)(out) = Na(+)(out) + H(+)(in). Its activity is regulated as follows. Li(+) activates Na(+)/H(+) exchanger. Its function is as follows. Plasma membrane Na(+)/H(+) antiporter. Mediates the electroneutral exchange of intracellular H(+) ions for extracellular Na(+). Major apical Na(+)/H(+) exchanger in the base of the colonic crypt. Controls in the colonic crypt intracellular pH (pHi) to direct colonic epithelial cell differentiation into the absorptive enterocyte lineage at the expense of the secretory lineage. The polypeptide is Sodium/hydrogen exchanger 2 (Slc9a2) (Rattus norvegicus (Rat)).